Here is a 61-residue protein sequence, read N- to C-terminus: Large ribosomal subunit protein uL30 (61 aa).

Belongs to the universal ribosomal protein uL30 family. In terms of assembly, part of the 50S ribosomal subunit.

In Acidithiobacillus ferrooxidans (strain ATCC 23270 / DSM 14882 / CIP 104768 / NCIMB 8455) (Ferrobacillus ferrooxidans (strain ATCC 23270)), this protein is Large ribosomal subunit protein uL30.